We begin with the raw amino-acid sequence, 133 residues long: Large ribosomal subunit protein bL17 (133 aa).

This sequence belongs to the bacterial ribosomal protein bL17 family. In terms of assembly, part of the 50S ribosomal subunit. Contacts protein L32.

In Polaromonas naphthalenivorans (strain CJ2), this protein is Large ribosomal subunit protein bL17.